We begin with the raw amino-acid sequence, 343 residues long: Glyceraldehyde-3-phosphate dehydrogenase (343 aa).

NAD(+) contacts are provided by residues Ser-12–Ile-13 and Gly-114. Ser-143–Asn-145 provides a ligand contact to D-glyceraldehyde 3-phosphate. Cys-144 acts as the Nucleophile in catalysis. NAD(+) is bound at residue Arg-172. His-198–Gly-199 provides a ligand contact to D-glyceraldehyde 3-phosphate. Gln-307 provides a ligand contact to NAD(+).

The protein belongs to the glyceraldehyde-3-phosphate dehydrogenase family. Homotetramer.

The protein localises to the cytoplasm. It carries out the reaction D-glyceraldehyde 3-phosphate + phosphate + NADP(+) = (2R)-3-phospho-glyceroyl phosphate + NADPH + H(+). It catalyses the reaction D-glyceraldehyde 3-phosphate + phosphate + NAD(+) = (2R)-3-phospho-glyceroyl phosphate + NADH + H(+). The protein operates within carbohydrate degradation; glycolysis; pyruvate from D-glyceraldehyde 3-phosphate: step 1/5. In Methanocaldococcus jannaschii (strain ATCC 43067 / DSM 2661 / JAL-1 / JCM 10045 / NBRC 100440) (Methanococcus jannaschii), this protein is Glyceraldehyde-3-phosphate dehydrogenase (gap).